The primary structure comprises 381 residues: Alcohol dehydrogenase class-3 (381 aa).

Cysteine 49 provides a ligand contact to Zn(2+). Histidine 50 lines the NAD(+) pocket. Threonine 51 and histidine 71 together coordinate an alcohol. Positions 71, 72, 101, 104, 107, 115, and 179 each coordinate Zn(2+). NAD(+) is bound by residues 204-209, aspartate 228, lysine 233, isoleucine 274, 297-299, 322-324, and arginine 374; these read GLGTVG, VGV, and TAF.

Belongs to the zinc-containing alcohol dehydrogenase family. Class-III subfamily. In terms of assembly, homodimer. It depends on Zn(2+) as a cofactor.

The protein resides in the cytoplasm. The enzyme catalyses a primary alcohol + NAD(+) = an aldehyde + NADH + H(+). It carries out the reaction a secondary alcohol + NAD(+) = a ketone + NADH + H(+). It catalyses the reaction S-(hydroxymethyl)glutathione + NADP(+) = S-formylglutathione + NADPH + H(+). The catalysed reaction is S-(hydroxymethyl)glutathione + NAD(+) = S-formylglutathione + NADH + H(+). The polypeptide is Alcohol dehydrogenase class-3 (Oryza sativa subsp. japonica (Rice)).